Here is a 143-residue protein sequence, read N- to C-terminus: Large ribosomal subunit protein uL16 (143 aa).

It belongs to the universal ribosomal protein uL16 family. Part of the 50S ribosomal subunit.

Its function is as follows. Binds 23S rRNA and is also seen to make contacts with the A and possibly P site tRNAs. The protein is Large ribosomal subunit protein uL16 of Fusobacterium nucleatum subsp. nucleatum (strain ATCC 25586 / DSM 15643 / BCRC 10681 / CIP 101130 / JCM 8532 / KCTC 2640 / LMG 13131 / VPI 4355).